The sequence spans 156 residues: Small ribosomal subunit protein uS7 (156 aa).

It belongs to the universal ribosomal protein uS7 family. Part of the 30S ribosomal subunit. Contacts proteins S9 and S11.

Functionally, one of the primary rRNA binding proteins, it binds directly to 16S rRNA where it nucleates assembly of the head domain of the 30S subunit. Is located at the subunit interface close to the decoding center, probably blocks exit of the E-site tRNA. This is Small ribosomal subunit protein uS7 from Streptococcus thermophilus (strain CNRZ 1066).